Here is a 166-residue protein sequence, read N- to C-terminus: 3-isopropylmalate dehydratase small subunit (166 aa).

It belongs to the LeuD family. LeuD type 2 subfamily. Heterodimer of LeuC and LeuD.

It catalyses the reaction (2R,3S)-3-isopropylmalate = (2S)-2-isopropylmalate. It functions in the pathway amino-acid biosynthesis; L-leucine biosynthesis; L-leucine from 3-methyl-2-oxobutanoate: step 2/4. Its function is as follows. Catalyzes the isomerization between 2-isopropylmalate and 3-isopropylmalate, via the formation of 2-isopropylmaleate. The chain is 3-isopropylmalate dehydratase small subunit from Aliarcobacter butzleri (strain RM4018) (Arcobacter butzleri).